The chain runs to 342 residues: Dihydroorotase (342 aa).

Positions 13 and 15 each coordinate Zn(2+). Substrate contacts are provided by residues 15–17 (HLR) and asparagine 41. Lysine 98, histidine 135, and histidine 173 together coordinate Zn(2+). Position 98 is an N6-carboxylysine (lysine 98). Histidine 135 provides a ligand contact to substrate. Leucine 218 lines the substrate pocket. Aspartate 246 contacts Zn(2+). Residue aspartate 246 is part of the active site. Residues histidine 250 and alanine 262 each contribute to the substrate site.

This sequence belongs to the metallo-dependent hydrolases superfamily. DHOase family. Class II DHOase subfamily. In terms of assembly, homodimer. Zn(2+) is required as a cofactor.

It carries out the reaction (S)-dihydroorotate + H2O = N-carbamoyl-L-aspartate + H(+). It participates in pyrimidine metabolism; UMP biosynthesis via de novo pathway; (S)-dihydroorotate from bicarbonate: step 3/3. In terms of biological role, catalyzes the reversible cyclization of carbamoyl aspartate to dihydroorotate. The chain is Dihydroorotase from Aliivibrio fischeri (strain MJ11) (Vibrio fischeri).